We begin with the raw amino-acid sequence, 158 residues long: Large ribosomal subunit protein uL16 (158 aa).

This sequence belongs to the universal ribosomal protein uL16 family. Part of the 50S ribosomal subunit.

Its function is as follows. Binds 23S rRNA and is also seen to make contacts with the A and possibly P site tRNAs. In Synechococcus sp. (strain CC9605), this protein is Large ribosomal subunit protein uL16.